A 245-amino-acid chain; its full sequence is MRHDGRQHDELRPITFDLDFISHPEGSVLITAGNTKVICNASVEDRVPPFLRGGGKGWITAEYSMLPRATNQRTIRESSKGKISGRTMEIQRLIGRALRAVVDLEKLGERTIWIDCDVIQADGGTRTASITGAFLAMAIAIGKLIKAGTIKTNPITDFLAAISVGIDKEQGILLDLNYEEDSSAEVDMNVIMTGSGRFVELQGTGEEATFSREDLNGLLGLAEKGIQELIDKQKEVLGDSLPELK.

Phosphate is bound by residues R86 and 124–126; that span reads GTR.

It belongs to the RNase PH family. As to quaternary structure, homohexameric ring arranged as a trimer of dimers. It has been suggested that the active form is the dimer which binds tRNA and that the hexameric form protects the substrate recognition loop (approximately residues 65-82) from proteolysis.

It catalyses the reaction tRNA(n+1) + phosphate = tRNA(n) + a ribonucleoside 5'-diphosphate. Its function is as follows. Phosphorolytic 3'-5' exoribonuclease that plays an important role in tRNA 3'-end maturation. Removes nucleotide residues following the 3'-CCA terminus of tRNAs; can also add nucleotides to the ends of RNA molecules by using nucleoside diphosphates as substrates, but this may not be physiologically important. Probably plays a role in initiation of 16S rRNA degradation (leading to ribosome degradation) during starvation. Plays a role in the secondary pathway of 23S rRNA 3' end maturation. This is Ribonuclease PH from Bacillus subtilis (strain 168).